The chain runs to 84 residues: U4-theraphotoxin-Hhn1a (84 aa).

Positions 1-22 are cleaved as a signal peptide; the sequence is MKVTLIAILTRAAVLVLHTTAA. Residues 23–47 constitute a propeptide that is removed on maturation; that stretch reads EELEESQLMEVSMPDTELAAVDEER. Disulfide bonds link C51–C65, C55–C76, and C70–C81.

The protein belongs to the neurotoxin 12 (Hwtx-2) family. 02 (Hwtx-2) subfamily. In terms of tissue distribution, expressed by the venom gland.

Its subcellular location is the secreted. In terms of biological role, postsynaptic neurotoxin. The polypeptide is U4-theraphotoxin-Hhn1a (Cyriopagopus hainanus (Chinese bird spider)).